Reading from the N-terminus, the 224-residue chain is Cytidylate kinase (224 aa).

G11–T19 is a binding site for ATP.

This sequence belongs to the cytidylate kinase family. Type 1 subfamily.

Its subcellular location is the cytoplasm. The catalysed reaction is CMP + ATP = CDP + ADP. The enzyme catalyses dCMP + ATP = dCDP + ADP. This is Cytidylate kinase (cmk) from Bacillus subtilis (strain 168).